We begin with the raw amino-acid sequence, 562 residues long: Phosphoacetylglucosamine mutase (562 aa).

Catalysis depends on Ser74, which acts as the Phosphoserine intermediate. The Mg(2+) site is built by Ser74, Asp291, Asp293, and Asp295. Residues 395–397, 526–530, and Arg535 each bind substrate; these read EAN and RPSGT.

Belongs to the phosphohexose mutase family. Mg(2+) serves as cofactor.

It catalyses the reaction N-acetyl-alpha-D-glucosamine 1-phosphate = N-acetyl-D-glucosamine 6-phosphate. Its pathway is nucleotide-sugar biosynthesis; UDP-N-acetyl-alpha-D-glucosamine biosynthesis; N-acetyl-alpha-D-glucosamine 1-phosphate from alpha-D-glucosamine 6-phosphate (route I): step 2/2. In terms of biological role, interconverts GlcNAc-6-P and GlcNAc-1-P. This is Phosphoacetylglucosamine mutase from Oryza sativa subsp. japonica (Rice).